Consider the following 236-residue polypeptide: UPF0257 lipoprotein YnfC (236 aa).

Residues 1–16 (MKKPLLLTLLCMILAG) form the signal peptide. Cysteine 17 carries N-palmitoyl cysteine lipidation. A lipid anchor (S-diacylglycerol cysteine) is attached at cysteine 17.

Belongs to the UPF0257 family.

The protein localises to the cell membrane. The sequence is that of UPF0257 lipoprotein YnfC from Salmonella heidelberg (strain SL476).